We begin with the raw amino-acid sequence, 840 residues long: Probable alpha-glucuronidase A (840 aa).

The signal sequence occupies residues 1 to 19 (MRSVITTLTLVASVGLAVA). 7 N-linked (GlcNAc...) asparagine glycosylation sites follow: N222, N310, N465, N527, N576, N682, and N732.

This sequence belongs to the glycosyl hydrolase 67 family.

Its subcellular location is the secreted. It carries out the reaction an alpha-D-glucuronoside + H2O = D-glucuronate + an alcohol. In terms of biological role, alpha-glucuronidase involved in the hydrolysis of xylan, a major structural heterogeneous polysaccharide found in plant biomass representing the second most abundant polysaccharide in the biosphere, after cellulose. Releases 4-O-methylglucuronic acid from xylan. In Aspergillus clavatus (strain ATCC 1007 / CBS 513.65 / DSM 816 / NCTC 3887 / NRRL 1 / QM 1276 / 107), this protein is Probable alpha-glucuronidase A (aguA).